A 452-amino-acid chain; its full sequence is Tubulin beta-2 chain (452 aa).

Residues Gln11, Glu74, Ser143, Val147, Thr148, Gly149, Asn209, and Asn231 each contribute to the GTP site. Glu74 contacts Mg(2+). Residues 431–452 (QEATADDEAEFEEEGEVEGEYD) form a disordered region. The span at 434–452 (TADDEAEFEEEGEVEGEYD) shows a compositional bias: acidic residues.

This sequence belongs to the tubulin family. In terms of assembly, dimer of alpha and beta chains. A typical microtubule is a hollow water-filled tube with an outer diameter of 25 nm and an inner diameter of 15 nM. Alpha-beta heterodimers associate head-to-tail to form protofilaments running lengthwise along the microtubule wall with the beta-tubulin subunit facing the microtubule plus end conferring a structural polarity. Microtubules usually have 13 protofilaments but different protofilament numbers can be found in some organisms and specialized cells. Mg(2+) serves as cofactor.

It is found in the cytoplasm. The protein resides in the cytoskeleton. Its function is as follows. Tubulin is the major constituent of microtubules, a cylinder consisting of laterally associated linear protofilaments composed of alpha- and beta-tubulin heterodimers. Microtubules grow by the addition of GTP-tubulin dimers to the microtubule end, where a stabilizing cap forms. Below the cap, tubulin dimers are in GDP-bound state, owing to GTPase activity of alpha-tubulin. The polypeptide is Tubulin beta-2 chain (Homarus americanus (American lobster)).